Reading from the N-terminus, the 370-residue chain is tRNA-specific 2-thiouridylase MnmA (370 aa).

Residues 12–19 and M38 each bind ATP; that span reads GLSGGVDS. The interval 98–100 is interaction with target base in tRNA; sequence NPD. C103 (nucleophile) is an active-site residue. Cysteines 103 and 201 form a disulfide. G127 lines the ATP pocket. Positions 151 to 153 are interaction with tRNA; the sequence is KDQ. C201 functions as the Cysteine persulfide intermediate in the catalytic mechanism. The interaction with tRNA stretch occupies residues 319–320; sequence RY.

The protein belongs to the MnmA/TRMU family.

The protein resides in the cytoplasm. The catalysed reaction is S-sulfanyl-L-cysteinyl-[protein] + uridine(34) in tRNA + AH2 + ATP = 2-thiouridine(34) in tRNA + L-cysteinyl-[protein] + A + AMP + diphosphate + H(+). Catalyzes the 2-thiolation of uridine at the wobble position (U34) of tRNA, leading to the formation of s(2)U34. This is tRNA-specific 2-thiouridylase MnmA from Verminephrobacter eiseniae (strain EF01-2).